Reading from the N-terminus, the 1196-residue chain is DNA polymerase beta (1196 aa).

It belongs to the DNA polymerase type-B family.

It carries out the reaction DNA(n) + a 2'-deoxyribonucleoside 5'-triphosphate = DNA(n+1) + diphosphate. DNA-directed DNA polymerase involved in viral DNA replication. The polypeptide is DNA polymerase beta (African swine fever virus (isolate Pig/Kenya/KEN-50/1950) (ASFV)).